A 251-amino-acid polypeptide reads, in one-letter code: MKRTLNIGIVLCENFLSDQQNAVDSYTQVYEDVRMFEFGLKLFQSLPFNIQETLIFCNAEQHKIVDKAAKKYKNTTVFFSRDTDVANVYEAKVFIQEKYKLTQDYKKRGVSSYYDSCCFILIEANRPLTAIKTVKSVYEKALIEKAAIAVLPYNGTLMNGNNDVVFSHLQDKNRFNYWKQSKAYEVQYPQAYTLNKLNQFSKQQFLRARSMLDLMKISNKSPLSIVDGSAYAFRVVTNLDFEILLGILKNG.

This is an uncharacterized protein from Mycoplasma genitalium (strain ATCC 33530 / DSM 19775 / NCTC 10195 / G37) (Mycoplasmoides genitalium).